The following is a 392-amino-acid chain: Lysine acetyltransferase (392 aa).

The catalysed reaction is L-lysine + acetyl-CoA = N(6)-acetyl-L-lysine + CoA + H(+). It participates in amino-acid degradation; L-lysine degradation via acetylation pathway; glutarate from L-lysine: step 1/6. With respect to regulation, activity is inhibited by 5-aminovalerate. Functionally, lysine N-6-acetyl transferase (LAT) that catalyzes the first step of the lysine degradation pathway. This Yarrowia lipolytica (strain CLIB 122 / E 150) (Yeast) protein is Lysine acetyltransferase.